We begin with the raw amino-acid sequence, 351 residues long: GDSL esterase/lipase At3g14820 (351 aa).

The first 22 residues, 1 to 22, serve as a signal peptide directing secretion; the sequence is MDLHLIGFLLWFFVVQVTTSSA. N25 carries an N-linked (GlcNAc...) asparagine glycan. S39 acts as the Nucleophile in catalysis. Residues D325 and H328 contribute to the active site.

The protein belongs to the 'GDSL' lipolytic enzyme family.

Its subcellular location is the secreted. The sequence is that of GDSL esterase/lipase At3g14820 from Arabidopsis thaliana (Mouse-ear cress).